A 55-amino-acid chain; its full sequence is MAKAVTIKVKLVSSADTGFYYVAKKNSRTMTDKMVKKKYDPVARKHVEFREAKIK.

This sequence belongs to the bacterial ribosomal protein bL33 family.

The sequence is that of Large ribosomal subunit protein bL33 (rpmG) from Nitrobacter hamburgensis (strain DSM 10229 / NCIMB 13809 / X14).